The primary structure comprises 417 residues: C6 finger transcription factor traC (417 aa).

Positions 1 to 40 (MNFSEQFTGRSEPGRKANRTSNNNTNSTTNVATVTTDDSN) are disordered. The span at 19–37 (RTSNNNTNSTTNVATVTTD) shows a compositional bias: low complexity. The segment at residues 44–73 (CDRCKGQKLRCIWENGSNTCRRCTRARAVC) is a DNA-binding region (zn(2)-C6 fungal-type). Disordered regions lie at residues 75–94 (QPRPRPFGRPRCSTKSKHHV) and 104–128 (WVSSTTQQPQENDAEMPMATSDDHD). The span at 80-94 (PFGRPRCSTKSKHHV) shows a compositional bias: basic residues. Residues 104–114 (WVSSTTQQPQE) show a composition bias toward polar residues.

The protein localises to the nucleus. C6 finger transcription factor; part of the tra gene cluster that produces terrestric acid. The clavatol biosynthesis cluster cla and the terrestric acid cluster tra are both involved in the production of peniphenones and penilactones. The polypeptide is C6 finger transcription factor traC (Penicillium crustosum (Blue mold fungus)).